The sequence spans 347 residues: Selenide, water dikinase (347 aa).

The active site involves Cys-17. ATP-binding positions include Lys-20 and 48–50 (TRD). Residue Asp-51 participates in Mg(2+) binding. ATP contacts are provided by residues Asp-68, Asp-91, and 139–141 (GHS). Mg(2+) is bound at residue Asp-91. Asp-227 serves as a coordination point for Mg(2+).

It belongs to the selenophosphate synthase 1 family. Class I subfamily. As to quaternary structure, homodimer. Mg(2+) is required as a cofactor.

It catalyses the reaction hydrogenselenide + ATP + H2O = selenophosphate + AMP + phosphate + 2 H(+). In terms of biological role, synthesizes selenophosphate from selenide and ATP. This chain is Selenide, water dikinase, found in Cronobacter sakazakii (strain ATCC BAA-894) (Enterobacter sakazakii).